A 538-amino-acid chain; its full sequence is Phosphoenolpyruvate carboxykinase (ATP) (538 aa).

3 residues coordinate substrate: Arg-64, Tyr-205, and Lys-211. ATP contacts are provided by residues Lys-211, His-230, and 246 to 254; that span reads GLSGTGKTT. 2 residues coordinate Mn(2+): Lys-211 and His-230. Asp-267 is a Mn(2+) binding site. Residues Glu-295, Arg-331, 447-448, and Thr-453 each bind ATP; that span reads RI. Arg-331 provides a ligand contact to substrate.

It belongs to the phosphoenolpyruvate carboxykinase (ATP) family. As to quaternary structure, monomer. It depends on Mn(2+) as a cofactor.

It is found in the cytoplasm. The catalysed reaction is oxaloacetate + ATP = phosphoenolpyruvate + ADP + CO2. It functions in the pathway carbohydrate biosynthesis; gluconeogenesis. Involved in the gluconeogenesis. Catalyzes the conversion of oxaloacetate (OAA) to phosphoenolpyruvate (PEP) through direct phosphoryl transfer between the nucleoside triphosphate and OAA. This Pasteurella multocida (strain Pm70) protein is Phosphoenolpyruvate carboxykinase (ATP).